The primary structure comprises 333 residues: Taste receptor type 2 member 123 (333 aa).

Topologically, residues Met-1–Phe-14 are extracellular. A helical transmembrane segment spans residues Ser-15–Ile-37. Residues Met-38 to Ala-57 are Cytoplasmic-facing. Residues Leu-58–Cys-77 form a helical membrane-spanning segment. The Extracellular portion of the chain corresponds to Pro-78–Gly-91. Residues Val-92–Leu-114 form a helical membrane-spanning segment. Residues Lys-115–Lys-133 are Cytoplasmic-facing. A helical membrane pass occupies residues Val-134 to Tyr-156. The Extracellular segment spans residues Asp-157–Asn-204. N-linked (GlcNAc...) asparagine glycosylation is found at Asn-167, Asn-186, and Asn-195. Residues Ser-205–Trp-227 traverse the membrane as a helical segment. Over Lys-228–Lys-250 the chain is Cytoplasmic. The helical transmembrane segment at Ala-251–Ile-273 threads the bilayer. Residues Leu-274 to Ile-282 are Extracellular-facing. Residues Val-283 to Leu-305 traverse the membrane as a helical segment. The Cytoplasmic segment spans residues Gly-306 to Phe-333.

Belongs to the G-protein coupled receptor T2R family. As to expression, expressed in subsets of taste receptor cells of the tongue and palate epithelium and exclusively in gustducin-positive cells. Expressed in the antrum and fundus (part of the stomach), duodenum and in gastric endocrine cells.

It localises to the membrane. Functionally, gustducin-coupled receptor implicated in the perception of bitter compounds in the oral cavity and the gastrointestinal tract. Signals through PLCB2 and the calcium-regulated cation channel TRPM5. The chain is Taste receptor type 2 member 123 (Tas2r123) from Rattus norvegicus (Rat).